Consider the following 321-residue polypeptide: Aspartate carbamoyltransferase catalytic subunit (321 aa).

Carbamoyl phosphate is bound by residues Arg-65 and Thr-66. An L-aspartate-binding site is contributed by Lys-93. Carbamoyl phosphate contacts are provided by Arg-115, His-143, and Gln-146. Positions 176 and 230 each coordinate L-aspartate. The carbamoyl phosphate site is built by Gly-271 and Pro-272.

Belongs to the aspartate/ornithine carbamoyltransferase superfamily. ATCase family. As to quaternary structure, heterododecamer (2C3:3R2) of six catalytic PyrB chains organized as two trimers (C3), and six regulatory PyrI chains organized as three dimers (R2).

The catalysed reaction is carbamoyl phosphate + L-aspartate = N-carbamoyl-L-aspartate + phosphate + H(+). It functions in the pathway pyrimidine metabolism; UMP biosynthesis via de novo pathway; (S)-dihydroorotate from bicarbonate: step 2/3. Functionally, catalyzes the condensation of carbamoyl phosphate and aspartate to form carbamoyl aspartate and inorganic phosphate, the committed step in the de novo pyrimidine nucleotide biosynthesis pathway. In Bartonella quintana (strain Toulouse) (Rochalimaea quintana), this protein is Aspartate carbamoyltransferase catalytic subunit.